Consider the following 451-residue polypeptide: Tubulin gamma-1 chain (451 aa).

Residue 142–148 (AGGTGSG) coordinates GTP.

Belongs to the tubulin family.

The protein localises to the cytoplasm. Its subcellular location is the cytoskeleton. It is found in the microtubule organizing center. The protein resides in the centrosome. It localises to the spindle. Tubulin is the major constituent of microtubules. The gamma chain is found at microtubule organizing centers (MTOC) such as the spindle poles or the centrosome, suggesting that it is involved in the minus-end nucleation of microtubule assembly. This is Tubulin gamma-1 chain (tubg1) from Xenopus laevis (African clawed frog).